The primary structure comprises 196 residues: Guanylate kinase (196 aa).

The 184-residue stretch at Gly8–Ala191 folds into the Guanylate kinase-like domain. Gly15–Gly22 is an ATP binding site.

This sequence belongs to the guanylate kinase family.

It is found in the cytoplasm. It catalyses the reaction GMP + ATP = GDP + ADP. In terms of biological role, essential for recycling GMP and indirectly, cGMP. The chain is Guanylate kinase from Bifidobacterium longum (strain NCC 2705).